The primary structure comprises 274 residues: Exosome complex component Rrp42 (274 aa).

It belongs to the RNase PH family. Rrp42 subfamily. As to quaternary structure, component of the archaeal exosome complex. Forms a hexameric ring-like arrangement composed of 3 Rrp41-Rrp42 heterodimers. The hexameric ring associates with a trimer of Rrp4 and/or Csl4 subunits.

Its subcellular location is the cytoplasm. In terms of biological role, non-catalytic component of the exosome, which is a complex involved in RNA degradation. Contributes to the structuring of the Rrp41 active site. The chain is Exosome complex component Rrp42 from Pyrobaculum aerophilum (strain ATCC 51768 / DSM 7523 / JCM 9630 / CIP 104966 / NBRC 100827 / IM2).